The sequence spans 204 residues: MVDFILNAQVRSDLGKGASRRLRRNAAQVPAVIYGGDKEPQSVTLELREIAKLLENEAAFSHVIALNVGGAKETVLIKALQRHPAKGFVMHADFLRVVADHKLTAHVPLHFINEDVAVGVKQAGGEISHTISEVEVSCLPKDLPEFIEVDMAKVELGQIVHLSDLKAPKGVELVQLAHGNDLAVANIHASRVVKEEGSEEGAAE.

Belongs to the bacterial ribosomal protein bL25 family. CTC subfamily. As to quaternary structure, part of the 50S ribosomal subunit; part of the 5S rRNA/L5/L18/L25 subcomplex. Contacts the 5S rRNA. Binds to the 5S rRNA independently of L5 and L18.

Functionally, this is one of the proteins that binds to the 5S RNA in the ribosome where it forms part of the central protuberance. This is Large ribosomal subunit protein bL25 from Pseudomonas paraeruginosa (strain DSM 24068 / PA7) (Pseudomonas aeruginosa (strain PA7)).